We begin with the raw amino-acid sequence, 302 residues long: Pyridoxal 5'-phosphate synthase subunit PdxS (302 aa).

A D-ribose 5-phosphate-binding site is contributed by aspartate 32. The active-site Schiff-base intermediate with D-ribose 5-phosphate is lysine 89. Glycine 161 contacts D-ribose 5-phosphate. Arginine 173 contributes to the D-glyceraldehyde 3-phosphate binding site. Residues glycine 222 and glycine 243–serine 244 each bind D-ribose 5-phosphate. The disordered stretch occupies residues glycine 278–valine 302.

This sequence belongs to the PdxS/SNZ family. As to quaternary structure, in the presence of PdxT, forms a dodecamer of heterodimers.

It catalyses the reaction aldehydo-D-ribose 5-phosphate + D-glyceraldehyde 3-phosphate + L-glutamine = pyridoxal 5'-phosphate + L-glutamate + phosphate + 3 H2O + H(+). Its pathway is cofactor biosynthesis; pyridoxal 5'-phosphate biosynthesis. In terms of biological role, catalyzes the formation of pyridoxal 5'-phosphate from ribose 5-phosphate (RBP), glyceraldehyde 3-phosphate (G3P) and ammonia. The ammonia is provided by the PdxT subunit. Can also use ribulose 5-phosphate and dihydroxyacetone phosphate as substrates, resulting from enzyme-catalyzed isomerization of RBP and G3P, respectively. This is Pyridoxal 5'-phosphate synthase subunit PdxS from Halorubrum lacusprofundi (strain ATCC 49239 / DSM 5036 / JCM 8891 / ACAM 34).